The primary structure comprises 508 residues: Phenylacetaldehyde synthase (508 aa).

His203 and His318 together coordinate L-phenylalanine. An N6-(pyridoxal phosphate)lysine modification is found at Lys319. Phe348 contributes to the L-phenylalanine binding site.

This sequence belongs to the group II decarboxylase family. Homotetramer. It depends on pyridoxal 5'-phosphate as a cofactor.

It catalyses the reaction L-phenylalanine + O2 + H2O + H(+) = 2-phenylacetaldehyde + H2O2 + NH4(+) + CO2. Bifunctional enzyme that catalyzes the decarboxylation of L-phenylalanine to produce 2-phenylethylamine, which is then oxidized to form 2-phenylacetaldehyde, a constituent of floral scent in petals. 2-phenylacetaldehyde is a precursor of 2-phenylethanol, another constituent of floral scent in petals. The sequence is that of Phenylacetaldehyde synthase from Rosa hybrid cultivar.